Here is a 201-residue protein sequence, read N- to C-terminus: Ran-specific GTPase-activating protein (201 aa).

Residues 1–26 show a composition bias toward basic and acidic residues; the sequence is MAAAKDTHEDHDTSTENTDESNHDPQ. Residues 1–35 form a disordered region; that stretch reads MAAAKDTHEDHDTSTENTDESNHDPQFEPIVSLPE. N-acetylalanine is present on A2. A phosphothreonine mark is found at T13 and T18. S21 and S60 each carry phosphoserine. Residues 26–164 enclose the RanBD1 domain; it reads QFEPIVSLPE…FEECRKEIEE (139 aa). At K150 the chain carries N6-acetyllysine; alternate. At K150 the chain carries N6-succinyllysine; alternate. The tract at residues 163 to 201 is disordered; the sequence is EEREKKAGSGKNDHAEKVAEKLEALSVKEETKEDAEEKQ. K183 carries the N6-acetyllysine modification. S188 is subject to Phosphoserine. K190 participates in a covalent cross-link: Glycyl lysine isopeptide (Lys-Gly) (interchain with G-Cter in SUMO2).

Belongs to the RANBP1 family. As to quaternary structure, interacts with RAN (via C-terminus of GTP-bound form) but not with GDP-bound RAN. Identified in a complex composed of RAN, RANGAP1 and RANBP1. Identified in a complex that contains TNPO1, RAN and RANBP1. Identified in a complex that contains CSE1L, KPNA2, RAN and RANBP1. Identified in a complex with nucleotide-free RAN and RCC1.

Plays a role in RAN-dependent nucleocytoplasmic transport. Alleviates the TNPO1-dependent inhibition of RAN GTPase activity and mediates the dissociation of RAN from proteins involved in transport into the nucleus. Induces a conformation change in the complex formed by XPO1 and RAN that triggers the release of the nuclear export signal of cargo proteins. Promotes the disassembly of the complex formed by RAN and importin beta. Promotes dissociation of RAN from a complex with KPNA2 and CSE1L. Required for normal mitotic spindle assembly and normal progress through mitosis via its effect on RAN. Does not increase the RAN GTPase activity by itself, but increases GTP hydrolysis mediated by RANGAP1. Inhibits RCC1-dependent exchange of RAN-bound GDP by GTP. This chain is Ran-specific GTPase-activating protein (RANBP1), found in Homo sapiens (Human).